Reading from the N-terminus, the 384-residue chain is Glutamate 5-kinase (384 aa).

Lys-24 provides a ligand contact to ATP. 3 residues coordinate substrate: Ser-64, Asp-149, and Asn-161. Residues 181–182 and 223–229 contribute to the ATP site; these read TD and TGGMRTK. The 83-residue stretch at 288–370 folds into the PUA domain; the sequence is PGAILIDAGA…RDIQTLLGYT (83 aa).

It belongs to the glutamate 5-kinase family.

The protein localises to the cytoplasm. The catalysed reaction is L-glutamate + ATP = L-glutamyl 5-phosphate + ADP. It functions in the pathway amino-acid biosynthesis; L-proline biosynthesis; L-glutamate 5-semialdehyde from L-glutamate: step 1/2. Its function is as follows. Catalyzes the transfer of a phosphate group to glutamate to form L-glutamate 5-phosphate. This Xylella fastidiosa (strain M12) protein is Glutamate 5-kinase.